We begin with the raw amino-acid sequence, 50 residues long: uncharacterized protein (50 aa).

A signal peptide spans 1-22 (MSKVAALGWGTLVYLGVGLLLA).

This is an uncharacterized protein from Dictyostelium discoideum (Social amoeba).